We begin with the raw amino-acid sequence, 249 residues long: Vesicle-associated membrane protein-associated protein A (249 aa).

At alanine 2 the chain carries N-acetylalanine. The Cytoplasmic segment spans residues 2–227 (ASASGAMAKH…ASFRDNVTSP (226 aa)). The 118-residue stretch at 14-131 (ILVLDPPTDL…MDSKLRCVFE (118 aa)) folds into the MSP domain. The tract at residues 50–53 (KVKT) is phosphorylated FFAT motif binding. An N6-acetyllysine modification is found at lysine 125. Residues 135 to 144 (ENDKLNDMEP) show a composition bias toward basic and acidic residues. The tract at residues 135 to 167 (ENDKLNDMEPSKAVPLNASKQDGPMPKPHSVSL) is disordered. Serine 166 carries the post-translational modification Phosphoserine. Residues 169–205 (DTETRKLMEECKRLQGEMMKLSEENRHLRDEGLRLRK) are a coiled coil. Position 170 is a phosphothreonine (threonine 170). Phosphoserine is present on residues serine 214, serine 216, and serine 219. Residues 228–248 (LPSLLVVIAAIFIGFFLGKFI) form a helical; Anchor for type IV membrane protein membrane-spanning segment.

The protein belongs to the VAMP-associated protein (VAP) (TC 9.B.17) family. Homodimer; disulfide-linked. Heterodimer with VAPB. Interacts with VAMP1, VAMP2, STX1A, BET1, SEC22C and with the C-terminal domain of OCLN. Interacts (via MSP domain) with OSBPL1A (via FFAT motif). Interacts (via MSP domain) with ZFYVE27; may retain ZFYVE27 in the endoplasmic reticulum and regulate its function in cell projections formation. Interacts with OSBP. Interacts (via C-terminus) with RSAD2/viperin (via C-terminus). Interacts with IFITM3. Interacts with OSBPL3 (phosphorylated form). Interacts with KIF5A in a ZFYVE27-dependent manner. Interacts (via MSP domain) with STARD3 (via phosphorylated FFAT motif); this interaction recruits VAPA to the endosome. Interacts with STARD3NL (via FFAT motif). Interacts with CERT1. Interacts with PLEKHA3 and SACM1L to form a ternary complex. Interacts with VPS13A (via FFAT motif). Interacts with RB1CC1 (via phosphorylated FFAT motif), MIGA2 (via phosphorylated FFAT motif), RMDN3 (via phosphorylated FFAT motif), KCNB1 (via phosphorylated FFAT motif) and KCNB2 (via phosphorylated FFAT motif). Interacts (via MSP domain) with WDR44 (via FFAT-like motif); the interactions connect the endoplasmic reticulum (ER) with the endosomal tubule. As to quaternary structure, (Microbial infection) Interacts with HCV protein NS5A and NS5B. In terms of tissue distribution, ubiquitous.

The protein localises to the endoplasmic reticulum membrane. The protein resides in the cell membrane. Its subcellular location is the cell junction. It is found in the tight junction. It localises to the nucleus membrane. Functionally, endoplasmic reticulum (ER)-anchored protein that mediates the formation of contact sites between the ER and endosomes via interaction with FFAT motif-containing proteins such as STARD3 or WDR44. STARD3-VAPA interaction enables cholesterol transfer from the ER to endosomes. Via interaction with WDR44 participates in neosynthesized protein export. In addition, recruited to the plasma membrane through OSBPL3 binding. The OSBPL3-VAPA complex stimulates RRAS signaling which in turn attenuates integrin beta-1 (ITGB1) activation at the cell surface. With OSBPL3, may regulate ER morphology. May play a role in vesicle trafficking. The sequence is that of Vesicle-associated membrane protein-associated protein A from Homo sapiens (Human).